Reading from the N-terminus, the 242-residue chain is Small ribosomal subunit protein uS2 (242 aa).

Belongs to the universal ribosomal protein uS2 family.

This chain is Small ribosomal subunit protein uS2, found in Vibrio campbellii (strain ATCC BAA-1116).